The following is a 119-amino-acid chain: Phosphoribosyl-AMP cyclohydrolase (119 aa).

Position 77 (Asp77) interacts with Mg(2+). Cys78 lines the Zn(2+) pocket. Mg(2+)-binding residues include Asp79 and Asp81. Zn(2+) is bound by residues Cys94 and Cys101.

The protein belongs to the PRA-CH family. As to quaternary structure, homodimer. Mg(2+) is required as a cofactor. The cofactor is Zn(2+).

The protein localises to the cytoplasm. The enzyme catalyses 1-(5-phospho-beta-D-ribosyl)-5'-AMP + H2O = 1-(5-phospho-beta-D-ribosyl)-5-[(5-phospho-beta-D-ribosylamino)methylideneamino]imidazole-4-carboxamide. It functions in the pathway amino-acid biosynthesis; L-histidine biosynthesis; L-histidine from 5-phospho-alpha-D-ribose 1-diphosphate: step 3/9. Catalyzes the hydrolysis of the adenine ring of phosphoribosyl-AMP. The protein is Phosphoribosyl-AMP cyclohydrolase of Ruegeria pomeroyi (strain ATCC 700808 / DSM 15171 / DSS-3) (Silicibacter pomeroyi).